The primary structure comprises 285 residues: Putative sugar uptake protein lmo0424 (285 aa).

Transmembrane regions (helical) follow at residues 2–21 (SIYL…PIIA), 31–50 (QLLG…FWIL), 55–77 (TVLS…LLQF), 111–133 (WQTV…GVVM), 146–168 (SVSF…YVVT), 172–194 (FDVT…AIGI), 207–229 (VTFN…LATA), 233–255 (VATS…ILIF), and 262–284 (LEWT…LSLL).

Belongs to the GRP transporter (TC 2.A.7.5) family.

It is found in the cell membrane. In Listeria monocytogenes serovar 1/2a (strain ATCC BAA-679 / EGD-e), this protein is Putative sugar uptake protein lmo0424.